Consider the following 576-residue polypeptide: MNVLELSEQEIIRRNSLNELRAMGIEPYPAAEYVTNAFSTDIKAEFKDDEEPRKVSVAGRMMSRRVMGKASFIELQDSKGRIQVYITRDDICPDENKEMYNTVFKRLLDLGDFIGIEGFVFRTQMGEISIHAKKLTVLSKSIKPLPIVKYKDGVAYDKFEDPELRYRQRYVDLAVNEEIKDIFIKRSKVYSSMREYFNSKGYMEVETPILQSIAGGAAARPFITHHNALDMPLYMRIASELYLKRLIVGGFEGVYEIGKNFRNEGMDRTHNPEFTCMEIYVAYKDYNWMMEFTEKMIEKICLDVNGTTQVKVGDNIIDFKAPYKRVTMLDSIKEHTGYDLTGMNEEQIREVCQKLNMEIDDTMGKGKLIDEIFGEFCEGTYIQPTFITDYPKEMSPLTKIHRSNPDLTERFELMVNGKELCNAYSELNDPIDQLERFEEQMKLSEKGDDEAMIIDKDFVRALEYGMPPTSGMGIGMDRLTMLMTGQSTIQEVLFFPQMRPEKITPKDTPAKFMELGISEDWVPVIQKAGYNLVSDMKEVNPQKLHMDICGINKKYKLELTNPTVDEVAGWIAKIEN.

Glu-412 and Glu-419 together coordinate Mg(2+).

Belongs to the class-II aminoacyl-tRNA synthetase family. Homodimer. It depends on Mg(2+) as a cofactor.

It localises to the cytoplasm. It catalyses the reaction tRNA(Lys) + L-lysine + ATP = L-lysyl-tRNA(Lys) + AMP + diphosphate. The polypeptide is Lysine--tRNA ligase (Phocaeicola vulgatus (strain ATCC 8482 / DSM 1447 / JCM 5826 / CCUG 4940 / NBRC 14291 / NCTC 11154) (Bacteroides vulgatus)).